The primary structure comprises 548 residues: ATP synthase subunit alpha (548 aa).

172-179 is a binding site for ATP; sequence GDRKTGKT.

Belongs to the ATPase alpha/beta chains family. F-type ATPases have 2 components, CF(1) - the catalytic core - and CF(0) - the membrane proton channel. CF(1) has five subunits: alpha(3), beta(3), gamma(1), delta(1), epsilon(1). CF(0) has three main subunits: a(1), b(2) and c(9-12). The alpha and beta chains form an alternating ring which encloses part of the gamma chain. CF(1) is attached to CF(0) by a central stalk formed by the gamma and epsilon chains, while a peripheral stalk is formed by the delta and b chains.

It is found in the cell membrane. The enzyme catalyses ATP + H2O + 4 H(+)(in) = ADP + phosphate + 5 H(+)(out). Functionally, produces ATP from ADP in the presence of a proton gradient across the membrane. The alpha chain is a regulatory subunit. The chain is ATP synthase subunit alpha from Mycolicibacterium smegmatis (strain ATCC 700084 / mc(2)155) (Mycobacterium smegmatis).